Here is a 529-residue protein sequence, read N- to C-terminus: UDP-glucuronosyltransferase 2B1 (529 aa).

A signal peptide spans 1–23 (MSMKQTSVFLLIQLICYFRPGAC). Residues Asn-134 and Asn-316 are each glycosylated (N-linked (GlcNAc...) asparagine). Residues 494 to 510 (VIGFLLLCVVGVVFIIT) traverse the membrane as a helical segment.

This sequence belongs to the UDP-glycosyltransferase family.

The protein localises to the endoplasmic reticulum membrane. It catalyses the reaction glucuronate acceptor + UDP-alpha-D-glucuronate = acceptor beta-D-glucuronoside + UDP + H(+). It carries out the reaction 17beta-estradiol + UDP-alpha-D-glucuronate = 17beta-estradiol 17-O-(beta-D-glucuronate) + UDP + H(+). UDP-glucuronosyltransferase (UGT) that catalyzes phase II biotransformation reactions in which lipophilic substrates are conjugated with glucuronic acid to increase the metabolite's water solubility, thereby facilitating excretion into either the urine or bile. Essential for the elimination and detoxification of drugs, xenobiotics and endogenous compounds. Catalyzes the glucuronidation of the endogenous estrogen hormone estradiol. This is UDP-glucuronosyltransferase 2B1 from Rattus norvegicus (Rat).